Consider the following 126-residue polypeptide: Aspartate 1-decarboxylase (126 aa).

Residue Ser-25 is the Schiff-base intermediate with substrate; via pyruvic acid of the active site. Ser-25 is modified (pyruvic acid (Ser)). Thr-57 provides a ligand contact to substrate. The active-site Proton donor is Tyr-58. Position 73–75 (73–75 (GAA)) interacts with substrate.

This sequence belongs to the PanD family. In terms of assembly, heterooctamer of four alpha and four beta subunits. It depends on pyruvate as a cofactor. Is synthesized initially as an inactive proenzyme, which is activated by self-cleavage at a specific serine bond to produce a beta-subunit with a hydroxyl group at its C-terminus and an alpha-subunit with a pyruvoyl group at its N-terminus.

Its subcellular location is the cytoplasm. It catalyses the reaction L-aspartate + H(+) = beta-alanine + CO2. It participates in cofactor biosynthesis; (R)-pantothenate biosynthesis; beta-alanine from L-aspartate: step 1/1. Catalyzes the pyruvoyl-dependent decarboxylation of aspartate to produce beta-alanine. The protein is Aspartate 1-decarboxylase of Saccharophagus degradans (strain 2-40 / ATCC 43961 / DSM 17024).